Consider the following 333-residue polypeptide: Fructose-1,6-bisphosphatase class 1 (333 aa).

Mg(2+) contacts are provided by glutamate 92, aspartate 113, leucine 115, and aspartate 116. Substrate-binding positions include 116–119 (DGSS), asparagine 209, tyrosine 242, and lysine 272. Glutamate 278 contributes to the Mg(2+) binding site.

This sequence belongs to the FBPase class 1 family. As to quaternary structure, homotetramer. Requires Mg(2+) as cofactor.

Its subcellular location is the cytoplasm. The enzyme catalyses beta-D-fructose 1,6-bisphosphate + H2O = beta-D-fructose 6-phosphate + phosphate. Its pathway is carbohydrate biosynthesis; Calvin cycle. This is Fructose-1,6-bisphosphatase class 1 from Chlorobium phaeovibrioides (strain DSM 265 / 1930) (Prosthecochloris vibrioformis (strain DSM 265)).